Reading from the N-terminus, the 400-residue chain is Argininosuccinate synthase (400 aa).

Residues 9–17 and A37 each bind ATP; that span reads AYSGGVDTS. Y88 contributes to the L-citrulline binding site. G118 is an ATP binding site. L-aspartate is bound by residues T120, N124, and D125. Residue N124 participates in L-citrulline binding. L-citrulline is bound by residues R128, S176, S185, E261, and Y273.

Belongs to the argininosuccinate synthase family. Type 1 subfamily. As to quaternary structure, homotetramer.

Its subcellular location is the cytoplasm. It catalyses the reaction L-citrulline + L-aspartate + ATP = 2-(N(omega)-L-arginino)succinate + AMP + diphosphate + H(+). Its pathway is amino-acid biosynthesis; L-arginine biosynthesis; L-arginine from L-ornithine and carbamoyl phosphate: step 2/3. This is Argininosuccinate synthase from Prochlorococcus marinus (strain MIT 9211).